The chain runs to 501 residues: Glucose-6-phosphate exchanger SLC37A2 (501 aa).

A helical membrane pass occupies residues 19–39 (SWFRGFILLLTFLIYACYHMS). 3 N-linked (GlcNAc...) asparagine glycosylation sites follow: Asn-53, Asn-62, and Asn-68. Transmembrane regions (helical) follow at residues 88–108 (GAVD…SGIF), 118–140 (LSAG…FWNI), 142–164 (MLWY…WPSV), 179–199 (FIMG…SLIA), and 210–230 (SFIV…LFLI). Residues 240–252 (PPRHHDDPEKEQD) show a composition bias toward basic and acidic residues. The disordered stretch occupies residues 240–266 (PPRHHDDPEKEQDNPEDPVNSPYSSRE). 6 consecutive transmembrane segments (helical) span residues 303–323 (CLLF…LYIF), 334–354 (GDLS…AGLI), 362–382 (ATTC…YNYI), 391–411 (IVML…ITTA), 434–454 (AIID…AGLI), and 462–482 (VFYM…RLVY).

Belongs to the major facilitator superfamily. Organophosphate:Pi antiporter (OPA) (TC 2.A.1.4) family. In terms of tissue distribution, highly expressed in bone marrow derived macrophages, and weakly in spleen.

The protein localises to the endoplasmic reticulum membrane. The catalysed reaction is D-glucose 6-phosphate(in) + phosphate(out) = D-glucose 6-phosphate(out) + phosphate(in). Inhibited by vanadate but not by chlorogenic acid. Functionally, inorganic phosphate and glucose-6-phosphate antiporter. May transport cytoplasmic glucose-6-phosphate into the lumen of the endoplasmic reticulum and translocate inorganic phosphate into the opposite direction. Independent of a lumenal glucose-6-phosphatase. May not play a role in homeostatic regulation of blood glucose levels. This is Glucose-6-phosphate exchanger SLC37A2 from Mus musculus (Mouse).